We begin with the raw amino-acid sequence, 363 residues long: Uroporphyrinogen decarboxylase (363 aa).

Substrate-binding positions include 36-40 (RQAGR), Asp-85, Tyr-160, Ser-215, and His-339.

It belongs to the uroporphyrinogen decarboxylase family. Homodimer.

Its subcellular location is the cytoplasm. The enzyme catalyses uroporphyrinogen III + 4 H(+) = coproporphyrinogen III + 4 CO2. Its pathway is porphyrin-containing compound metabolism; protoporphyrin-IX biosynthesis; coproporphyrinogen-III from 5-aminolevulinate: step 4/4. Catalyzes the decarboxylation of four acetate groups of uroporphyrinogen-III to yield coproporphyrinogen-III. The protein is Uroporphyrinogen decarboxylase of Saccharopolyspora erythraea (strain ATCC 11635 / DSM 40517 / JCM 4748 / NBRC 13426 / NCIMB 8594 / NRRL 2338).